The following is a 641-amino-acid chain: Forkhead box protein P4 (641 aa).

2 disordered regions span residues 1-43 (MMVE…NGEL) and 239-264 (SFPT…RRES). Polar residues-rich tracts occupy residues 8–27 (IRST…QSDS) and 239–259 (SFPT…NGQN). The C2H2-type zinc finger occupies 278-303 (GECRWPGCEALCEDMGQFIKHLNTEH). The tract at residues 320–341 (VQQLEIQLAKESERLQAMMTHL) is leucine-zipper. The ctbp1-binding stretch occupies residues 354–358 (PLNLV). The fork-head DNA-binding region spans 436-526 (RPPFTYASLI…PPKMTGSPTL (91 aa)). The segment at 563–641 (SSGSVLHGGH…ESESPMEDLP (79 aa)) is disordered. Residues 576-599 (TSTGEPGNSNGSSPRLSPQYSQSI) are compositionally biased toward polar residues. Positions 600–611 (HVKEEPAEDDVR) are enriched in basic and acidic residues. The span at 629 to 641 (RDLESESPMEDLP) shows a compositional bias: acidic residues.

As to quaternary structure, dimerization is required for DNA-binding. In terms of tissue distribution, first expressed in the anterior neural field of stage 15 embryos. At stage 18, localized in three domains of the brain (rostral forebrain, midbrain and hindbrain) and in the eye anlage. Cerebral and retinal expression persists at later stages with additional expression in the branchial arches, at the base of the hatching gland, and in the pancreas.

The protein localises to the nucleus. Functionally, transcriptional repressor. The protein is Forkhead box protein P4 of Xenopus laevis (African clawed frog).